Reading from the N-terminus, the 156-residue chain is ATP synthase subunit b (156 aa).

The chain crosses the membrane as a helical span at residues L7–L29.

It belongs to the ATPase B chain family. In terms of assembly, F-type ATPases have 2 components, F(1) - the catalytic core - and F(0) - the membrane proton channel. F(1) has five subunits: alpha(3), beta(3), gamma(1), delta(1), epsilon(1). F(0) has three main subunits: a(1), b(2) and c(10-14). The alpha and beta chains form an alternating ring which encloses part of the gamma chain. F(1) is attached to F(0) by a central stalk formed by the gamma and epsilon chains, while a peripheral stalk is formed by the delta and b chains.

Its subcellular location is the cell inner membrane. Its function is as follows. F(1)F(0) ATP synthase produces ATP from ADP in the presence of a proton or sodium gradient. F-type ATPases consist of two structural domains, F(1) containing the extramembraneous catalytic core and F(0) containing the membrane proton channel, linked together by a central stalk and a peripheral stalk. During catalysis, ATP synthesis in the catalytic domain of F(1) is coupled via a rotary mechanism of the central stalk subunits to proton translocation. In terms of biological role, component of the F(0) channel, it forms part of the peripheral stalk, linking F(1) to F(0). In Saccharophagus degradans (strain 2-40 / ATCC 43961 / DSM 17024), this protein is ATP synthase subunit b.